A 235-amino-acid polypeptide reads, in one-letter code: Small ribosomal subunit protein uS3 (235 aa).

The 69-residue stretch at 39-107 folds into the KH type-2 domain; sequence VRKFLNKELA…PAQINIAEVK (69 aa).

The protein belongs to the universal ribosomal protein uS3 family. As to quaternary structure, part of the 30S ribosomal subunit. Forms a tight complex with proteins S10 and S14.

In terms of biological role, binds the lower part of the 30S subunit head. Binds mRNA in the 70S ribosome, positioning it for translation. The polypeptide is Small ribosomal subunit protein uS3 (Mannheimia succiniciproducens (strain KCTC 0769BP / MBEL55E)).